The chain runs to 155 residues: Large ribosomal subunit protein uL13 (155 aa).

This sequence belongs to the universal ribosomal protein uL13 family. In terms of assembly, part of the 50S ribosomal subunit.

Its function is as follows. This protein is one of the early assembly proteins of the 50S ribosomal subunit, although it is not seen to bind rRNA by itself. It is important during the early stages of 50S assembly. The chain is Large ribosomal subunit protein uL13 from Aeropyrum pernix (strain ATCC 700893 / DSM 11879 / JCM 9820 / NBRC 100138 / K1).